The primary structure comprises 700 residues: Elongation factor G (700 aa).

The tr-type G domain maps to 8–290 (ERYRNIGISA…AVVEFMPSPV (283 aa)). GTP-binding positions include 17–24 (AHIDAGKT), 88–92 (DTPGH), and 142–145 (NKMD).

Belongs to the TRAFAC class translation factor GTPase superfamily. Classic translation factor GTPase family. EF-G/EF-2 subfamily.

The protein resides in the cytoplasm. Its function is as follows. Catalyzes the GTP-dependent ribosomal translocation step during translation elongation. During this step, the ribosome changes from the pre-translocational (PRE) to the post-translocational (POST) state as the newly formed A-site-bound peptidyl-tRNA and P-site-bound deacylated tRNA move to the P and E sites, respectively. Catalyzes the coordinated movement of the two tRNA molecules, the mRNA and conformational changes in the ribosome. This Albidiferax ferrireducens (strain ATCC BAA-621 / DSM 15236 / T118) (Rhodoferax ferrireducens) protein is Elongation factor G.